The chain runs to 508 residues: Glycerol kinase (508 aa).

Threonine 14 contacts ADP. ATP is bound by residues threonine 14, threonine 15, and serine 16. Threonine 14 provides a ligand contact to sn-glycerol 3-phosphate. Position 18 (arginine 18) interacts with ADP. Residues arginine 84, glutamate 85, and tyrosine 136 each coordinate sn-glycerol 3-phosphate. Glycerol-binding residues include arginine 84, glutamate 85, and tyrosine 136. Histidine 232 carries the phosphohistidine; by HPr modification. Residue aspartate 246 participates in sn-glycerol 3-phosphate binding. Residues aspartate 246 and glutamine 247 each contribute to the glycerol site. Threonine 268 and glycine 311 together coordinate ADP. Residues threonine 268, glycine 311, glutamine 315, and glycine 412 each coordinate ATP. ADP is bound by residues glycine 412 and asparagine 416.

The protein belongs to the FGGY kinase family. Homotetramer and homodimer (in equilibrium). Post-translationally, the phosphoenolpyruvate-dependent sugar phosphotransferase system (PTS), including enzyme I, and histidine-containing protein (HPr) are required for the phosphorylation, which leads to the activation of the enzyme.

The enzyme catalyses glycerol + ATP = sn-glycerol 3-phosphate + ADP + H(+). The protein operates within polyol metabolism; glycerol degradation via glycerol kinase pathway; sn-glycerol 3-phosphate from glycerol: step 1/1. Its activity is regulated as follows. Activated by phosphorylation and inhibited by fructose 1,6-bisphosphate (FBP). Its function is as follows. Key enzyme in the regulation of glycerol uptake and metabolism. Catalyzes the phosphorylation of glycerol to yield sn-glycerol 3-phosphate. In Streptococcus pyogenes serotype M3 (strain ATCC BAA-595 / MGAS315), this protein is Glycerol kinase.